The sequence spans 118 residues: MISKPDKNKKRQRRHARVRSKISGTAECPRLNVYRSNKNIYAQVIDDVAGVTLVSASTLDSEISGGSKTELASQVGALVAKRAVEKKIENVVFDRGGYIYHGRVQALAEAARENGLKF.

The disordered stretch occupies residues 1–20 (MISKPDKNKKRQRRHARVRS). Over residues 7 to 20 (KNKKRQRRHARVRS) the composition is skewed to basic residues.

Belongs to the universal ribosomal protein uL18 family. In terms of assembly, part of the 50S ribosomal subunit; part of the 5S rRNA/L5/L18/L25 subcomplex. Contacts the 5S and 23S rRNAs.

In terms of biological role, this is one of the proteins that bind and probably mediate the attachment of the 5S RNA into the large ribosomal subunit, where it forms part of the central protuberance. In Pediococcus pentosaceus (strain ATCC 25745 / CCUG 21536 / LMG 10740 / 183-1w), this protein is Large ribosomal subunit protein uL18.